We begin with the raw amino-acid sequence, 610 residues long: MNSQELKKRQENIRNFSIIAHIDHGKSTLADRILEKTETVSSREMQAQLLDSMDLERERGITIKLNAIELNYKAKNGQDYIFHLIDTPGHVDFTYEVSRSLAACEGAVLVVDAAQGIEAQTLANVYLALDNDLEILPVINKIDLPAADPERVRQEIEDVIGLDASEAVLASAKSGIGIEDILEQIVEKVPAPSGDVDQPLQALIFDSVYDAYRGVILQVRVVNGMVKPGDTIQMMSNGKTFDVTEVGIFTPKAIGRDFLATGDVGYIAASIKTVADTRVGDTVTLATNPAAEPLHGYKQMNPMVFAGIYPIESNKYNDLREALEKLQLNDASLQFEPETSQALGFGFRCGFLGLLHMDVIQERLEREFNIDLIMTAPSVVYHVNITDGDMLEVSNPSEFPDPTKVDSIEEPYVKAQIMVPQEFVGAVMELAQRKRGDFVTMDYIDDNRVNVIYHIPLAEIVFDFFDKLKSSTRGYASFDYEIAEYRRSQLVKMDILLNGDKVDALSFIVHRAFAYERGKLIVEKLKKIIPRQQFEVPIQAAIGQKIVARSDIKALRKNVLAKCYGGDVSRKRKLLEKQKAGKKRMKAIGSVEVPQEAFLSVLSMDDESKK.

Residues Glu-11 to Ser-193 form the tr-type G domain. Residues Asp-23–Thr-28 and Asn-140–Asp-143 each bind GTP.

Belongs to the TRAFAC class translation factor GTPase superfamily. Classic translation factor GTPase family. LepA subfamily.

The protein localises to the cell membrane. It catalyses the reaction GTP + H2O = GDP + phosphate + H(+). Its function is as follows. Required for accurate and efficient protein synthesis under certain stress conditions. May act as a fidelity factor of the translation reaction, by catalyzing a one-codon backward translocation of tRNAs on improperly translocated ribosomes. Back-translocation proceeds from a post-translocation (POST) complex to a pre-translocation (PRE) complex, thus giving elongation factor G a second chance to translocate the tRNAs correctly. Binds to ribosomes in a GTP-dependent manner. The polypeptide is Elongation factor 4 (Streptococcus equi subsp. equi (strain 4047)).